A 225-amino-acid polypeptide reads, in one-letter code: 2-C-methyl-D-erythritol 4-phosphate cytidylyltransferase (225 aa).

Belongs to the IspD/TarI cytidylyltransferase family. IspD subfamily.

It carries out the reaction 2-C-methyl-D-erythritol 4-phosphate + CTP + H(+) = 4-CDP-2-C-methyl-D-erythritol + diphosphate. Its pathway is isoprenoid biosynthesis; isopentenyl diphosphate biosynthesis via DXP pathway; isopentenyl diphosphate from 1-deoxy-D-xylulose 5-phosphate: step 2/6. In terms of biological role, catalyzes the formation of 4-diphosphocytidyl-2-C-methyl-D-erythritol from CTP and 2-C-methyl-D-erythritol 4-phosphate (MEP). This is 2-C-methyl-D-erythritol 4-phosphate cytidylyltransferase from Clostridium perfringens (strain SM101 / Type A).